Here is a 449-residue protein sequence, read N- to C-terminus: uncharacterized protein (449 aa).

Residues 1–20 (MWTALVLIWIFSLSLSESHA) form the signal peptide. Residues 21 to 400 (ASNDPRNFVP…PLTQAVVDKT (380 aa)) lie on the Extracellular side of the membrane. N-linked (GlcNAc...) asparagine glycosylation occurs at Asn-49. 3 disordered regions span residues 72–101 (AHLNSMEVTTEDTSRTDVSEPATSGGAADG), 154–187 (MTAASSTPMTLALPAPTSTSTGRTPSTTATGHPS), and 215–381 (QTVA…PSTQ). Low complexity-rich tracts occupy residues 154 to 184 (MTAASSTPMTLALPAPTSTSTGRTPSTTATG) and 215 to 234 (QTVATTANTSSPMSTRPSPS). Composition is skewed to polar residues over residues 255 to 279 (GPISQVSVDQPVVNTTNKSTPMPSN) and 352 to 367 (TPGTDSTGPTPRSSGG). The chain crosses the membrane as a helical span at residues 401 to 421 (LLLVVLLLGVTLFITVLVLFA). Residues 422 to 449 (LQAYESYKKKDYTQVDYLINGMYADSEM) are Cytoplasmic-facing.

As to expression, highest expression in heart, placenta, liver, pancreas and colon. Also detected in brain, lung, skeletal muscle, kidney, spleen, prostate, testis, ovary and small intestine. Lowest expression in thymus and leukocytes.

Its subcellular location is the cell membrane. The protein resides in the golgi apparatus. It is found in the trans-Golgi network membrane. This is an uncharacterized protein from Homo sapiens (Human).